A 58-amino-acid chain; its full sequence is Small integral membrane protein 11 (58 aa).

The chain crosses the membrane as a helical span at residues 10-32 (PLLLYILAAKTLILCLTFAGVKM). Residues 29–58 (GVKMYQRKRLEAKQQKLEAERKKQSEKKDN) adopt a coiled-coil conformation.

In terms of tissue distribution, expressed in heart, spleen, liver, stomach, muscle, lung, testis, skin, PBL and bone marrow.

It is found in the membrane. The sequence is that of Small integral membrane protein 11 from Homo sapiens (Human).